Reading from the N-terminus, the 278-residue chain is Large ribosomal subunit protein uL2 (278 aa).

The disordered stretch occupies residues 211–278 (KRWLGKRPQS…LIIRRRKGSK (68 aa)). Residues 258 to 270 (KTRDTKKASEKLI) are compositionally biased toward basic and acidic residues.

The protein belongs to the universal ribosomal protein uL2 family. As to quaternary structure, part of the 50S ribosomal subunit. Forms a bridge to the 30S subunit in the 70S ribosome.

Functionally, one of the primary rRNA binding proteins. Required for association of the 30S and 50S subunits to form the 70S ribosome, for tRNA binding and peptide bond formation. It has been suggested to have peptidyltransferase activity; this is somewhat controversial. Makes several contacts with the 16S rRNA in the 70S ribosome. This Lactobacillus helveticus (strain DPC 4571) protein is Large ribosomal subunit protein uL2.